We begin with the raw amino-acid sequence, 61 residues long: Conotoxin Vn5.3 (61 aa).

An N-terminal signal peptide occupies residues 1–19 (MHCLPVFVILLLLIASAPG). A propeptide spanning residues 20–50 (VDVQPKTKNFMTRASLRDFAKKTPKRLSKLR) is cleaved from the precursor.

The protein belongs to the conotoxin T superfamily. Contains 2 disulfide bonds that can be either 'C1-C3, C2-C4' or 'C1-C4, C2-C3', since these disulfide connectivities have been observed for conotoxins with cysteine framework V (for examples, see AC P0DQQ7 and AC P81755). In terms of tissue distribution, expressed by the venom duct.

It is found in the secreted. The sequence is that of Conotoxin Vn5.3 from Conus ventricosus (Mediterranean cone).